The primary structure comprises 461 residues: Tip elongation protein 1 (461 aa).

In terms of domain architecture, CAP-Gly spans 22–69; it reads GEVENRKGVYVGLELLPEFAEFGKNRGVVDGREYFKTKNNEKTGIFVP. 5 positions are modified to phosphoserine: serine 82, serine 84, serine 289, serine 294, and serine 305. A coiled-coil region spans residues 134–418; it reads TEKILQKRIE…RMSPAEFELE (285 aa). Residues 278-303 are compositionally biased toward polar residues; that stretch reads KANSSTANEKLSHMESSSPTLTNASF. The tract at residues 278 to 323 is disordered; that stretch reads KANSSTANEKLSHMESSSPTLTNASFESPKRGKGSNDLPENHPQRR. Phosphothreonine is present on threonine 367. The segment at 417–437 is disordered; sequence LETTQEVEENDSDSHDDEETW.

In terms of assembly, monomer. Interacts with tea1 and tea2. Interacts with tea4 in the presence of tea1.

It localises to the cytoplasm. The protein resides in the cytoskeleton. Has a role in stabilizing and targeting the growing tips of the microtubules along the long axis of the cell, directing them to the ends of the cell. Acts as a cargo for tea2. This Schizosaccharomyces pombe (strain 972 / ATCC 24843) (Fission yeast) protein is Tip elongation protein 1 (tip1).